Consider the following 526-residue polypeptide: Lysine--tRNA ligase (526 aa).

Positions proline 44 to threonine 52 match the 'HIGH' region motif. A 'KMSKS' region motif is present at residues lysine 290–serine 294. Lysine 293 is a binding site for ATP.

This sequence belongs to the class-I aminoacyl-tRNA synthetase family.

Its subcellular location is the cytoplasm. It catalyses the reaction tRNA(Lys) + L-lysine + ATP = L-lysyl-tRNA(Lys) + AMP + diphosphate. In Rickettsia typhi (strain ATCC VR-144 / Wilmington), this protein is Lysine--tRNA ligase.